Here is a 989-residue protein sequence, read N- to C-terminus: MESFRQIKNNNVDLISNNDPLDKNRLLIEDLWESVLREECPDDQAERLIQLKELSYSKQIDGNSSKTFKNEIVDIVNSMDLAESIAAARAFSLYFQLVNILEQRVEEDRYIQSFTNKDVQKSPDNLDPFAPALARQNAPVTFRELFYRLRKLNVPPGKLEELLQEMDIRLVFTAHPTEIVRHTIRHKQTRVANLLKKIQIEQFLTKDEKISLKTQLKEEVRLWWRTDELHQFKPSVLDEVDYSLHYFQQVLFNAMPQLRGRITEALTENYPDVQLPPESFCNFGSWVGSDRDGNPSVTPDITWRTACYQRQLMLDRYIVATSNLRDQLSVSMQWSQVSSSLLESLETDRVKFPEIYEARATRYRSEPYRLKLSYILEKLRLTQERNNLLADSGWKFDFEGEIDNKNIDKVENLYYKSVNEFTYDLELIKNSLISTDLTCDSVNNLLTQVHIFGFSLASLDIRQESTRHSDAIQELTNYLDLSVQYDQMSEEEKIKWLIDELNTKRPLIPSDVNWTKTTEETFSVFKMVKRLQQEFGSRICHSYVISMSHSASDLLEVLLLAKEMGLLDQDSQKSKLLVVPLFETVEDLQRAPEVMEKLFKLDFYKSLLPKVGESFKPLQELMLGYSDSNKDSGFVSSNWEIHRAQIALQNLSSRNNILLRLFHGRGGSVGRGGGPAYQAILAQPSGTLKGRIKITEQGEVLASKYSLPELALYNLETVTTAVIQNSLVNSRLDATPEWNQLMSRLAETSRSHYRKLVHENPDLLNFFQEVTPIEEISKLQISSRPARRKKGAKDLSSLRAIPWVFGWTQSRFLLPSWFGVGTALSAELNSDPQQIELLRVLHQRWPFFRMLISKVEMTLSKVDLEVARYYVDTLGSKENKDSFDNIFEVISKEYNLTKSLILEITGKNKLLESDRDLKSSVSLRNKTIIPLGFLQVSLLRRLRDQTRQPPISEFLIDKDESRRAYSRSELLRGALLTINGIAAGMRNTG.

Residues His-175 and Lys-630 contribute to the active site.

This sequence belongs to the PEPCase type 1 family. Mg(2+) serves as cofactor.

The enzyme catalyses oxaloacetate + phosphate = phosphoenolpyruvate + hydrogencarbonate. Its function is as follows. Forms oxaloacetate, a four-carbon dicarboxylic acid source for the tricarboxylic acid cycle. This chain is Phosphoenolpyruvate carboxylase, found in Prochlorococcus marinus (strain MIT 9301).